Reading from the N-terminus, the 20-residue chain is Photosystem II stability/assembly factor HCF136, chloroplastic (20 aa).

Belongs to the Ycf48 family.

Its subcellular location is the plastid. It is found in the chloroplast thylakoid lumen. Its function is as follows. Essential for photosystem II (PSII) biogenesis; required for assembly of an early intermediate in PSII assembly that includes D2 (psbD) and cytochrome b559. This Spinacia oleracea (Spinach) protein is Photosystem II stability/assembly factor HCF136, chloroplastic.